The following is a 182-amino-acid chain: Ribulose bisphosphate carboxylase small subunit, chloroplastic 6 (182 aa).

The N-terminal 41 residues, 1-41 (MAATMMSKTIISSKQCSKPIAPPKVSINKGFVNTSAAIKNR), are a transit peptide targeting the chloroplast.

It belongs to the RuBisCO small chain family. As to quaternary structure, heterohexadecamer of 8 large and 8 small subunits.

The protein resides in the plastid. It is found in the chloroplast. Its function is as follows. RuBisCO catalyzes two reactions: the carboxylation of D-ribulose 1,5-bisphosphate, the primary event in carbon dioxide fixation, as well as the oxidative fragmentation of the pentose substrate. Both reactions occur simultaneously and in competition at the same active site. Although the small subunit is not catalytic it is essential for maximal activity. The protein is Ribulose bisphosphate carboxylase small subunit, chloroplastic 6 of Acetabularia peniculus (Green alga).